Here is a 242-residue protein sequence, read N- to C-terminus: Protein ABHD14A (242 aa).

The helical; Signal-anchor for type II membrane protein transmembrane segment at 6 to 26 threads the bilayer; the sequence is AALLGLGLLLMFLLYMGLPGP. Asn38 carries an N-linked (GlcNAc...) asparagine glycan. Active-site charge relay system residues include Ser142, Asp193, and His220.

It belongs to the AB hydrolase superfamily. ABHD14 family.

It localises to the cytoplasm. It is found in the membrane. Possible role in granule neuron development. The protein is Protein ABHD14A of Rattus norvegicus (Rat).